Reading from the N-terminus, the 511-residue chain is MDNYEGSDPWNTSSNAWTKDDDHVVSTTNSEPSLNGISGEFNTLNFSTPLDTNEEDTGFLPTNDVLEESIWDDSRNPLGATGMSQTPNIAANETVIDKNDARDQNIEESEADLLDWTNNVRKTYRPLDADIIIIEEIPEREGLLFKHANYLVKHLIALPSTSPSEERTVVRRYSDFLWLREILLKRYPFRMIPELPPKRIGSQNADQLFLKKRRIGLSRFINLVMKHPKLSNDDLVLTFLTVRTDLTSWRKQATYDTSNEFADKKISQEFMKMWKKEFAEQWNQAASCIDTSMELWYRITLLLERHEKRIMQMVHERNFFETLVDNFSEVTPKLYPVQQNDTILDINNNLSIIKKHLETTSSICKQETEEISGTLSPKFKIFTDILLSLRSLFERYKIMAANNVVELQRHVELNKEKLESMKGKPDVSGAEYDRIKKIIQKDRRSIIEQSNRAWLIRQCILEEFTIFQETQFLITRAFQDWAKLNSNHAGLKLNEWEKLVTSIMDMPISRE.

The tract at residues 1–36 (MDNYEGSDPWNTSSNAWTKDDDHVVSTTNSEPSLNG) is disordered. Residues 25-36 (VSTTNSEPSLNG) show a composition bias toward polar residues. The 120-residue stretch at 128-247 (DADIIIIEEI…TFLTVRTDLT (120 aa)) folds into the PX domain. A 1,2-diacyl-sn-glycero-3-phospho-(1D-myo-inositol-3-phosphate)-binding residues include Arg172, Ser174, Lys198, and Arg213.

This sequence belongs to the sorting nexin family. In terms of assembly, homodimer. Forms an autoinhibited tetramer consisting of 2 homodimers that self-interact, wherein the membrane-interacting BAR surfaces are sequestered and the PX lipid-binding sites are occluded. Interacts with VPS1.

Its subcellular location is the cytoplasm. It is found in the endosome membrane. In terms of biological role, required for vacuolar protein sorting. Component of the retromer-mediated endosome-to-Golgi retrograde pathway. Required for efficient cargo export from the endosome, promoting VPS1-mediated fission of retromer-coated tubules that bud from the endosome. The polypeptide is Sorting nexin MVP1 (MVP1) (Saccharomyces cerevisiae (strain ATCC 204508 / S288c) (Baker's yeast)).